A 318-amino-acid chain; its full sequence is Glycerol 2-dehydrogenase (NADP(+)) (318 aa).

The active-site Proton donor is Tyr-52. Residue His-115 coordinates substrate. 217 to 277 (SPLGSQNQVP…SSTPSRIESN (61 aa)) provides a ligand contact to NADP(+).

This sequence belongs to the aldo/keto reductase family.

The enzyme catalyses glycerol + NADP(+) = dihydroxyacetone + NADPH + H(+). Its function is as follows. Glycerol oxidoreductase probably involved in glycerol synthesis. This Hypocrea jecorina (Trichoderma reesei) protein is Glycerol 2-dehydrogenase (NADP(+)) (gld2).